Here is a 401-residue protein sequence, read N- to C-terminus: Carbamoyl phosphate synthase small chain (401 aa).

Positions methionine 1–aspartate 203 are CPSase. Residues serine 56, glycine 255, and glycine 257 each coordinate L-glutamine. Positions histidine 207–glutamate 395 constitute a Glutamine amidotransferase type-1 domain. The Nucleophile role is filled by cysteine 284. Positions 285, 288, 326, 328, and 329 each coordinate L-glutamine. Residues histidine 368 and glutamate 370 contribute to the active site.

The protein belongs to the CarA family. In terms of assembly, composed of two chains; the small (or glutamine) chain promotes the hydrolysis of glutamine to ammonia, which is used by the large (or ammonia) chain to synthesize carbamoyl phosphate. Tetramer of heterodimers (alpha,beta)4.

It catalyses the reaction hydrogencarbonate + L-glutamine + 2 ATP + H2O = carbamoyl phosphate + L-glutamate + 2 ADP + phosphate + 2 H(+). The enzyme catalyses L-glutamine + H2O = L-glutamate + NH4(+). It functions in the pathway amino-acid biosynthesis; L-arginine biosynthesis; carbamoyl phosphate from bicarbonate: step 1/1. The protein operates within pyrimidine metabolism; UMP biosynthesis via de novo pathway; (S)-dihydroorotate from bicarbonate: step 1/3. Its function is as follows. Small subunit of the glutamine-dependent carbamoyl phosphate synthetase (CPSase). CPSase catalyzes the formation of carbamoyl phosphate from the ammonia moiety of glutamine, carbonate, and phosphate donated by ATP, constituting the first step of 2 biosynthetic pathways, one leading to arginine and/or urea and the other to pyrimidine nucleotides. The small subunit (glutamine amidotransferase) binds and cleaves glutamine to supply the large subunit with the substrate ammonia. The sequence is that of Carbamoyl phosphate synthase small chain from Rhizobium meliloti (strain 1021) (Ensifer meliloti).